The primary structure comprises 544 residues: Probable protein kinase UbiB (544 aa).

The Protein kinase domain maps to 123–501 (DFDIKPLASA…KRQQAKGQFL (379 aa)). ATP contacts are provided by residues 129–137 (LASASIAQV) and Lys-152. Asp-287 (proton acceptor) is an active-site residue. The chain crosses the membrane as a helical span at residues 515-537 (LLTSNITVLASISAATGAAFWLF).

Belongs to the ABC1 family. UbiB subfamily.

The protein resides in the cell inner membrane. It participates in cofactor biosynthesis; ubiquinone biosynthesis [regulation]. In terms of biological role, is probably a protein kinase regulator of UbiI activity which is involved in aerobic coenzyme Q (ubiquinone) biosynthesis. This is Probable protein kinase UbiB from Aliivibrio fischeri (strain ATCC 700601 / ES114) (Vibrio fischeri).